A 692-amino-acid polypeptide reads, in one-letter code: Elongation factor G (692 aa).

The tr-type G domain maps to 8 to 282; that stretch reads PNTRNIGIMA…NVVAYLPSPV (275 aa). GTP is bound by residues 17 to 24, 81 to 85, and 135 to 138; these read AHIDAGKT, DTPGH, and NKMD.

It belongs to the TRAFAC class translation factor GTPase superfamily. Classic translation factor GTPase family. EF-G/EF-2 subfamily.

The protein localises to the cytoplasm. In terms of biological role, catalyzes the GTP-dependent ribosomal translocation step during translation elongation. During this step, the ribosome changes from the pre-translocational (PRE) to the post-translocational (POST) state as the newly formed A-site-bound peptidyl-tRNA and P-site-bound deacylated tRNA move to the P and E sites, respectively. Catalyzes the coordinated movement of the two tRNA molecules, the mRNA and conformational changes in the ribosome. The polypeptide is Elongation factor G (Brevibacillus brevis (strain 47 / JCM 6285 / NBRC 100599)).